The sequence spans 562 residues: Arginine--tRNA ligase (562 aa).

The 'HIGH' region motif lies at 122–132; the sequence is PNIAKDMHVGH.

Belongs to the class-I aminoacyl-tRNA synthetase family. As to quaternary structure, monomer.

The protein localises to the cytoplasm. The enzyme catalyses tRNA(Arg) + L-arginine + ATP = L-arginyl-tRNA(Arg) + AMP + diphosphate. This is Arginine--tRNA ligase from Chlamydia abortus (strain DSM 27085 / S26/3) (Chlamydophila abortus).